A 90-amino-acid chain; its full sequence is Acyl-CoA-binding protein homolog (90 aa).

Residues 3–89 (LQEQFDQAAS…VESLIASLGL (87 aa)) enclose the ACB domain. An acyl-CoA-binding positions include arginine 15, 30–34 (YALFK), lysine 53, lysine 57, and tyrosine 76.

It belongs to the ACBP family.

Functionally, binds medium- and long-chain acyl-CoA esters with very high affinity and may function as an intracellular carrier of acyl-CoA esters. The polypeptide is Acyl-CoA-binding protein homolog (Manduca sexta (Tobacco hawkmoth)).